The sequence spans 308 residues: MSEEKNYELWLDNYFFKPNFWQKCLTFVLFPLSVLYAFFAILNTFFRKKIVFKKPVISVGNLSFGGNGKTPLCKAIAREFDGVFIVLRGYKRKSKGLFVVKNQNEILCTLAQSGDEAMEYAFEENIKGVIVSEDRVKGIEKAFELGAKIVVLDDAFSKFHIKKFDILLESKIKPYFNFTLPSGAYRLPKIYEKRADFIALEGRDFVRYSFVKENPKAVLVTAIAKPFRLYEHFIKARACYFFKDHYEFKKEELENLLKKHNCDTLMLTFKDFVKVKDFGFKCQIIELNIELKDSLREKIKTYIKEFEQ.

ATP is bound at residue 63 to 70 (SFGGNGKT).

Belongs to the LpxK family.

The enzyme catalyses a lipid A disaccharide + ATP = a lipid IVA + ADP + H(+). It participates in glycolipid biosynthesis; lipid IV(A) biosynthesis; lipid IV(A) from (3R)-3-hydroxytetradecanoyl-[acyl-carrier-protein] and UDP-N-acetyl-alpha-D-glucosamine: step 6/6. In terms of biological role, transfers the gamma-phosphate of ATP to the 4'-position of a tetraacyldisaccharide 1-phosphate intermediate (termed DS-1-P) to form tetraacyldisaccharide 1,4'-bis-phosphate (lipid IVA). The protein is Tetraacyldisaccharide 4'-kinase of Campylobacter jejuni subsp. jejuni serotype O:23/36 (strain 81-176).